The sequence spans 458 residues: Phosphoglucosamine mutase (458 aa).

Ser108 functions as the Phosphoserine intermediate in the catalytic mechanism. Mg(2+)-binding residues include Ser108, Asp247, Asp249, and Asp251. Phosphoserine is present on Ser108.

This sequence belongs to the phosphohexose mutase family. The cofactor is Mg(2+). In terms of processing, activated by phosphorylation.

The catalysed reaction is alpha-D-glucosamine 1-phosphate = D-glucosamine 6-phosphate. Its function is as follows. Catalyzes the conversion of glucosamine-6-phosphate to glucosamine-1-phosphate. This chain is Phosphoglucosamine mutase, found in Nitrosomonas eutropha (strain DSM 101675 / C91 / Nm57).